The sequence spans 543 residues: Probable zinc transporter protein DDB_G0283629 (543 aa).

Positions 1–175 (MENFKNNELE…EESKPLNQLR (175 aa)) are disordered. Residues 1 to 186 (MENFKNNELE…LDSKKKARYS (186 aa)) lie on the Cytoplasmic side of the membrane. 2 stretches are compositionally biased toward low complexity: residues 11-26 (SSPIINKNNSSHSINN) and 41-55 (NNNNDNNNTITNSHI). Basic and acidic residues-rich tracts occupy residues 56–66 (NNHDHKHNHEH) and 76–104 (HNHDHDHNHEEEYGHGNELEHNNDQEHNV). Low complexity predominate over residues 105-116 (GNKNLLTNNNNQ). Positions 130-140 (EDGSSSGGGGG) are enriched in gly residues. The chain crosses the membrane as a helical span at residues 187–207 (LILALTLTTIFMVGEIVGGYF). At 208-216 (ANSLAIMTD) the chain is on the extracellular side. Residues 217 to 237 (AAHLLTDIGAMFLSLFAMWIS) traverse the membrane as a helical segment. Topologically, residues 238–251 (QHPPTSSMSFGFHR) are cytoplasmic. A helical transmembrane segment spans residues 252 to 272 (AEILGALVSVLMIWALTGVLV). Residues 273–289 (YEAIQRILYPPDAVDGK) lie on the Extracellular side of the membrane. Residues 290–310 (IMFIIASCGLFINIIDAIILH) traverse the membrane as a helical segment. Over 311-375 (WGSGGHGHSH…VRNINVHSAY (65 aa)) the chain is Cytoplasmic. Residues 319 to 342 (SHGGGHGHSHGIGGGTQKKKSKKN) are disordered. Residues 376-396 (IHVLGDCFQSIGVMVASCIIW) traverse the membrane as a helical segment. The Extracellular portion of the chain corresponds to 397-402 (VHPHWK). The chain crosses the membrane as a helical span at residues 403–423 (IADPITTLIFSVIVLGTTIKL). The Cytoplasmic portion of the chain corresponds to 424-543 (LRESLGVLME…NDNLSSPPNQ (120 aa)). The segment at 516-543 (KCKDHSCPPPKPKKKKIKNDNLSSPPNQ) is disordered.

This sequence belongs to the cation diffusion facilitator (CDF) transporter (TC 2.A.4) family. SLC30A subfamily.

The protein resides in the membrane. In terms of biological role, may be involved in zinc transport from the cytoplasm to either intracellular organelles or extracellular spaces. This Dictyostelium discoideum (Social amoeba) protein is Probable zinc transporter protein DDB_G0283629.